Here is a 408-residue protein sequence, read N- to C-terminus: Histidine--tRNA ligase (408 aa).

It belongs to the class-II aminoacyl-tRNA synthetase family. In terms of assembly, homodimer.

The protein resides in the cytoplasm. The catalysed reaction is tRNA(His) + L-histidine + ATP = L-histidyl-tRNA(His) + AMP + diphosphate + H(+). The protein is Histidine--tRNA ligase of Campylobacter concisus (strain 13826).